The sequence spans 382 residues: Chaperone protein DnaJ (382 aa).

A J domain is found at 5 to 70; the sequence is DYYEVLGVSR…DKKAAYDRYG (66 aa). A CR-type zinc finger spans residues 141–219; sequence GVQKTINVPA…CHGAGRVEKE (79 aa). The Zn(2+) site is built by cysteine 154, cysteine 157, cysteine 171, cysteine 174, cysteine 193, cysteine 196, cysteine 207, and cysteine 210. 4 CXXCXGXG motif repeats span residues 154-161, 171-178, 193-200, and 207-214; these read CDACKGTG, CPTCSGMG, CPTCNGMG, and CKVCHGAG.

Belongs to the DnaJ family. In terms of assembly, homodimer. Zn(2+) serves as cofactor.

It localises to the cytoplasm. In terms of biological role, participates actively in the response to hyperosmotic and heat shock by preventing the aggregation of stress-denatured proteins and by disaggregating proteins, also in an autonomous, DnaK-independent fashion. Unfolded proteins bind initially to DnaJ; upon interaction with the DnaJ-bound protein, DnaK hydrolyzes its bound ATP, resulting in the formation of a stable complex. GrpE releases ADP from DnaK; ATP binding to DnaK triggers the release of the substrate protein, thus completing the reaction cycle. Several rounds of ATP-dependent interactions between DnaJ, DnaK and GrpE are required for fully efficient folding. Also involved, together with DnaK and GrpE, in the DNA replication of plasmids through activation of initiation proteins. In Cereibacter sphaeroides (strain ATCC 17029 / ATH 2.4.9) (Rhodobacter sphaeroides), this protein is Chaperone protein DnaJ.